The following is a 152-amino-acid chain: MFRGASAINLDTKGRIAIPKRYREPLHAEFNSQIVITVDFQSPCLLLYPFDEWSKIEAKLLLLSDTRATERAMKRLLLGYAHECELDGNGRILLPPPLRQYANLEKRAMLVGQLNKFELWDETAWQKQIEQSRETIQSEEFADNERLADFSL.

SpoVT-AbrB domains are found at residues 5–52 (ASAI…PFDE) and 81–124 (AHEC…DETA).

This sequence belongs to the MraZ family. Forms oligomers.

It is found in the cytoplasm. The protein localises to the nucleoid. This is Transcriptional regulator MraZ from Shewanella sediminis (strain HAW-EB3).